A 335-amino-acid polypeptide reads, in one-letter code: Fructose-1,6-bisphosphatase class 1 (335 aa).

Residues Glu90, Asp113, Leu115, and Asp116 each contribute to the Mg(2+) site. Residues 116–119, Asn209, Tyr242, and Lys272 contribute to the substrate site; that span reads DGSS. Glu278 contacts Mg(2+).

It belongs to the FBPase class 1 family. In terms of assembly, homotetramer. Mg(2+) serves as cofactor.

The protein localises to the cytoplasm. The enzyme catalyses beta-D-fructose 1,6-bisphosphate + H2O = beta-D-fructose 6-phosphate + phosphate. The protein operates within carbohydrate biosynthesis; gluconeogenesis. The sequence is that of Fructose-1,6-bisphosphatase class 1 from Histophilus somni (strain 2336) (Haemophilus somnus).